A 264-amino-acid chain; its full sequence is Acyl-[acyl-carrier-protein]--UDP-N-acetylglucosamine O-acyltransferase (264 aa).

It belongs to the transferase hexapeptide repeat family. LpxA subfamily. As to quaternary structure, homotrimer.

It is found in the cytoplasm. It carries out the reaction a (3R)-hydroxyacyl-[ACP] + UDP-N-acetyl-alpha-D-glucosamine = a UDP-3-O-[(3R)-3-hydroxyacyl]-N-acetyl-alpha-D-glucosamine + holo-[ACP]. It functions in the pathway glycolipid biosynthesis; lipid IV(A) biosynthesis; lipid IV(A) from (3R)-3-hydroxytetradecanoyl-[acyl-carrier-protein] and UDP-N-acetyl-alpha-D-glucosamine: step 1/6. Functionally, involved in the biosynthesis of lipid A, a phosphorylated glycolipid that anchors the lipopolysaccharide to the outer membrane of the cell. This is Acyl-[acyl-carrier-protein]--UDP-N-acetylglucosamine O-acyltransferase from Rickettsia conorii (strain ATCC VR-613 / Malish 7).